A 358-amino-acid polypeptide reads, in one-letter code: scyllo-inositol 2-dehydrogenase (NADP(+)) IolW (358 aa).

Belongs to the Gfo/Idh/MocA family.

The enzyme catalyses scyllo-inositol + NADP(+) = scyllo-inosose + NADPH + H(+). Functionally, catalyzes the reversible NADPH-dependent reduction of scyllo-inosose (SIS) to scyllo-inositol (SI). Cannot use NADH instead of NADPH. May be involved in reduction of not only SIS but also various oxidized compounds manifested upon stressful conditions. The chain is scyllo-inositol 2-dehydrogenase (NADP(+)) IolW from Bacillus subtilis (strain 168).